Here is a 228-residue protein sequence, read N- to C-terminus: Ribose-5-phosphate isomerase A (228 aa).

Residues 27–30 (TGTT), 86–89 (DGAD), and 100–103 (KGMG) contribute to the substrate site. Catalysis depends on Glu-109, which acts as the Proton acceptor. Residue Lys-127 coordinates substrate.

The protein belongs to the ribose 5-phosphate isomerase family. Homodimer.

It catalyses the reaction aldehydo-D-ribose 5-phosphate = D-ribulose 5-phosphate. It participates in carbohydrate degradation; pentose phosphate pathway; D-ribose 5-phosphate from D-ribulose 5-phosphate (non-oxidative stage): step 1/1. Functionally, catalyzes the reversible conversion of ribose-5-phosphate to ribulose 5-phosphate. This Borreliella burgdorferi (strain ZS7) (Borrelia burgdorferi) protein is Ribose-5-phosphate isomerase A.